The chain runs to 389 residues: Phosphopentomutase (389 aa).

Residues aspartate 9, aspartate 282, histidine 287, aspartate 323, histidine 324, and histidine 335 each coordinate Mn(2+).

This sequence belongs to the phosphopentomutase family. The cofactor is Mn(2+).

It localises to the cytoplasm. The catalysed reaction is 2-deoxy-alpha-D-ribose 1-phosphate = 2-deoxy-D-ribose 5-phosphate. It carries out the reaction alpha-D-ribose 1-phosphate = D-ribose 5-phosphate. It participates in carbohydrate degradation; 2-deoxy-D-ribose 1-phosphate degradation; D-glyceraldehyde 3-phosphate and acetaldehyde from 2-deoxy-alpha-D-ribose 1-phosphate: step 1/2. Functionally, isomerase that catalyzes the conversion of deoxy-ribose 1-phosphate (dRib-1-P) and ribose 1-phosphate (Rib-1-P) to deoxy-ribose 5-phosphate (dRib-5-P) and ribose 5-phosphate (Rib-5-P), respectively. This chain is Phosphopentomutase, found in Kosmotoga olearia (strain ATCC BAA-1733 / DSM 21960 / TBF 19.5.1).